The primary structure comprises 357 residues: Alanine racemase (357 aa).

Residue K33 is the Proton acceptor; specific for D-alanine of the active site. N6-(pyridoxal phosphate)lysine is present on K33. Residue R129 participates in substrate binding. Y253 functions as the Proton acceptor; specific for L-alanine in the catalytic mechanism. M301 provides a ligand contact to substrate.

This sequence belongs to the alanine racemase family. Pyridoxal 5'-phosphate serves as cofactor.

It carries out the reaction L-alanine = D-alanine. Its pathway is amino-acid biosynthesis; D-alanine biosynthesis; D-alanine from L-alanine: step 1/1. Catalyzes the interconversion of L-alanine and D-alanine. May also act on other amino acids. The polypeptide is Alanine racemase (alr) (Pseudomonas savastanoi pv. phaseolicola (strain 1448A / Race 6) (Pseudomonas syringae pv. phaseolicola (strain 1448A / Race 6))).